A 2293-amino-acid polypeptide reads, in one-letter code: Protein Ycf2 A (2293 aa).

1647-1654 (GSIGTGRS) lines the ATP pocket.

It belongs to the Ycf2 family.

Its subcellular location is the plastid. It localises to the chloroplast stroma. In terms of biological role, probable ATPase of unknown function. Its presence in a non-photosynthetic plant (Epifagus virginiana) and experiments in tobacco indicate that it has an essential function which is probably not related to photosynthesis. The polypeptide is Protein Ycf2 A (Crucihimalaya wallichii (Rock-cress)).